The sequence spans 394 residues: Deoxyguanosinetriphosphate triphosphohydrolase-like protein (394 aa).

Positions 1-36 (MSQAPYFVPRAPYAEDPSKSKGRRFKEDESRTRTPF) are disordered. The segment covering 25–36 (FKEDESRTRTPF) has biased composition (basic and acidic residues). Positions 70 to 210 (RLTHTLEVAQ…AALADDIAYN (141 aa)) constitute an HD domain.

Belongs to the dGTPase family. Type 2 subfamily.

The polypeptide is Deoxyguanosinetriphosphate triphosphohydrolase-like protein (Caulobacter vibrioides (strain ATCC 19089 / CIP 103742 / CB 15) (Caulobacter crescentus)).